A 42-amino-acid polypeptide reads, in one-letter code: Delta-hexatoxin-Hv1b (42 aa).

4 disulfide bridges follow: Cys-1–Cys-15, Cys-8–Cys-20, Cys-14–Cys-31, and Cys-16–Cys-42.

The protein belongs to the neurotoxin 06 (delta-actx) family. As to expression, expressed by the venom gland.

It is found in the secreted. Functionally, lethal neurotoxin. Slows the inactivation of tetrodotoxin-sensitive voltage-gated sodium channels (Nav) by binding to site 3 of the channel, resulting in repetitive firing in autonomic and motor nerve fibers. This chain is Delta-hexatoxin-Hv1b, found in Hadronyche versuta (Blue mountains funnel-web spider).